A 208-amino-acid chain; its full sequence is Large ribosomal subunit protein uL4 (208 aa).

The tract at residues 50 to 83 is disordered; it reads VKTRAEVSGGGRKPWKQKGTGRARQGSIRAPQWK.

It belongs to the universal ribosomal protein uL4 family. As to quaternary structure, part of the 50S ribosomal subunit.

In terms of biological role, one of the primary rRNA binding proteins, this protein initially binds near the 5'-end of the 23S rRNA. It is important during the early stages of 50S assembly. It makes multiple contacts with different domains of the 23S rRNA in the assembled 50S subunit and ribosome. Functionally, forms part of the polypeptide exit tunnel. The protein is Large ribosomal subunit protein uL4 of Mycoplasma mycoides subsp. mycoides SC (strain CCUG 32753 / NCTC 10114 / PG1).